We begin with the raw amino-acid sequence, 1003 residues long: Serine/threonine-protein kinase spk-1 (1003 aa).

3 disordered regions span residues 92–112, 169–309, and 337–408; these read NSTN…TQNE, NEND…SATS, and RPSI…KRGG. A compositionally biased stretch (acidic residues) spans 202 to 211; sequence SDEEDVESQD. Residues 248–265 show a composition bias toward basic and acidic residues; that stretch reads SNDDKNEKDVLVDEDTSK. Low complexity predominate over residues 285–300; it reads TIDSSVSSSTSSSSTG. Residues 346 to 359 are compositionally biased toward basic and acidic residues; the sequence is KKTEVNANEERLDD. One can recognise a Protein kinase domain in the interval 422–904; the sequence is YHVIRKLGWG…AKIALKHPFL (483 aa). ATP contacts are provided by residues 428-436 and lysine 451; that span reads LGWGHFSTV. The active-site Proton acceptor is the aspartate 555. The interval 927–1003 is disordered; the sequence is DGLIPEPFDG…DIERFQLDLQ (77 aa). A compositionally biased stretch (basic and acidic residues) spans 936 to 953; it reads GNEHQEVYRDENDSRSAS. Residues 954-964 are compositionally biased toward low complexity; sequence ERSANSRSAGG. Residues 983–992 are compositionally biased toward polar residues; it reads VITNNETTDI. Basic and acidic residues predominate over residues 994-1003; sequence DIERFQLDLQ.

It belongs to the protein kinase superfamily. Ser/Thr protein kinase family. Interacts with rsp-3. Predominantly coexpressed with rsp-3 in adult hermaphrodite germlines.

It carries out the reaction L-seryl-[protein] + ATP = O-phospho-L-seryl-[protein] + ADP + H(+). The catalysed reaction is L-threonyl-[protein] + ATP = O-phospho-L-threonyl-[protein] + ADP + H(+). Functionally, required for embryogenesis and germline development in both adult hermaphrodites and males. SR-protein kinase (SRPK) that binds directly to and phosphorylates the RS domain of rsp-3/CeSF2 in vitro. In Caenorhabditis elegans, this protein is Serine/threonine-protein kinase spk-1 (spk-1).